A 312-amino-acid chain; its full sequence is Cytoplasmic dynein intermediate light chain DYN3 (312 aa).

It belongs to the dynein light intermediate chain DYN3 family. As to quaternary structure, the dynein complex consists of at least two heavy chains and a number of intermediate and light chains. Interacts with DYN1.

It localises to the cytoplasm. It is found in the cytoskeleton. Functionally, component of the cytoplasmic dynein which acts as a motor for the intracellular retrograde motility of vesicles and organelles along microtubules. May play an important role in the proper orientation of the mitotic spindle into the budding daughter cell yeast. Probably required for normal progression of the cell cycle. This Saccharomyces cerevisiae (strain ATCC 204508 / S288c) (Baker's yeast) protein is Cytoplasmic dynein intermediate light chain DYN3 (DYN3).